The chain runs to 370 residues: mRNA cap guanine-N(7) methyltransferase 1 (370 aa).

Residues 1-11 (MKRGFSDSPSS) are compositionally biased toward low complexity. The interval 1–34 (MKRGFSDSPSSSAPPPSSRFKSNPEGDSQFLEDE) is disordered. In terms of domain architecture, mRNA cap 0 methyltransferase spans 61 to 341 (SPIIHLKKLN…LYLSFVLRKR (281 aa)). Residue 70–71 (NN) coordinates mRNA. S-adenosyl-L-methionine contacts are provided by residues Lys74, Ala92, Asp114, 150-151 (DC), and 172-174 (QFA).

This sequence belongs to the class I-like SAM-binding methyltransferase superfamily. mRNA cap 0 methyltransferase family.

It is found in the nucleus. It carries out the reaction a 5'-end (5'-triphosphoguanosine)-ribonucleoside in mRNA + S-adenosyl-L-methionine = a 5'-end (N(7)-methyl 5'-triphosphoguanosine)-ribonucleoside in mRNA + S-adenosyl-L-homocysteine. Its function is as follows. mRNA-capping methyltransferase that methylates the N7 position of the added guanosine to the 5'-cap structure of mRNAs. Binds RNA containing 5'-terminal GpppC. This chain is mRNA cap guanine-N(7) methyltransferase 1, found in Arabidopsis thaliana (Mouse-ear cress).